The following is a 132-amino-acid chain: Fatty acid-binding protein, intestinal (132 aa).

An N-acetylalanine modification is found at Ala-2. Hexadecanoate-binding residues include Trp-83 and Arg-107. Residues Trp-83 and Arg-107 each contribute to the tetradecanoate site.

Belongs to the calycin superfamily. Fatty-acid binding protein (FABP) family.

The protein localises to the cytoplasm. Its function is as follows. FABPs are thought to play a role in the intracellular transport of long-chain fatty acids and their acyl-CoA esters. FABP2 is probably involved in triglyceride-rich lipoprotein synthesis. Binds saturated long-chain fatty acids with a high affinity, but binds with a lower affinity to unsaturated long-chain fatty acids. FABP2 may also help maintain energy homeostasis by functioning as a lipid sensor. The polypeptide is Fatty acid-binding protein, intestinal (FABP2) (Bos taurus (Bovine)).